The chain runs to 177 residues: Putative 3-methyladenine DNA glycosylase (177 aa).

This sequence belongs to the DNA glycosylase MPG family.

The polypeptide is Putative 3-methyladenine DNA glycosylase (Rickettsia felis (strain ATCC VR-1525 / URRWXCal2) (Rickettsia azadi)).